A 473-amino-acid polypeptide reads, in one-letter code: Cysteine--tRNA ligase (473 aa).

Cys-28 lines the Zn(2+) pocket. A 'HIGH' region motif is present at residues 30–40 (MTVYDFCHIGH). Zn(2+) contacts are provided by Cys-212, His-237, and Glu-241. The short motif at 277–281 (KMSKS) is the 'KMSKS' region element. ATP is bound at residue Lys-280.

It belongs to the class-I aminoacyl-tRNA synthetase family. Monomer. It depends on Zn(2+) as a cofactor.

It localises to the cytoplasm. The catalysed reaction is tRNA(Cys) + L-cysteine + ATP = L-cysteinyl-tRNA(Cys) + AMP + diphosphate. The polypeptide is Cysteine--tRNA ligase (Polynucleobacter necessarius subsp. necessarius (strain STIR1)).